Consider the following 382-residue polypeptide: Chorismate synthase (382 aa).

NADP(+) is bound by residues arginine 39 and arginine 45. FMN-binding positions include 127-129 (RAS), 245-246 (QA), glycine 290, 305-309 (KPIPT), and arginine 331.

Belongs to the chorismate synthase family. In terms of assembly, homotetramer. FMNH2 serves as cofactor.

It catalyses the reaction 5-O-(1-carboxyvinyl)-3-phosphoshikimate = chorismate + phosphate. Its pathway is metabolic intermediate biosynthesis; chorismate biosynthesis; chorismate from D-erythrose 4-phosphate and phosphoenolpyruvate: step 7/7. Functionally, catalyzes the anti-1,4-elimination of the C-3 phosphate and the C-6 proR hydrogen from 5-enolpyruvylshikimate-3-phosphate (EPSP) to yield chorismate, which is the branch point compound that serves as the starting substrate for the three terminal pathways of aromatic amino acid biosynthesis. This reaction introduces a second double bond into the aromatic ring system. The sequence is that of Chorismate synthase from Desulfitobacterium hafniense (strain DSM 10664 / DCB-2).